Reading from the N-terminus, the 206-residue chain is Holliday junction branch migration complex subunit RuvA (206 aa).

The domain I stretch occupies residues 1 to 64 (MIGRLSGTIL…EDAQLLYGFN (64 aa)). The domain II stretch occupies residues 65–143 (KKSERELFRE…GWGEGDLFTP (79 aa)). A flexible linker region spans residues 144-157 (ASDAAASNAEIQKY). The segment at 158–206 (SSARAEDEAVSALIALGYKALQAAKVVSQVVKPEMSSENIIREALRSMV) is domain III.

This sequence belongs to the RuvA family. Homotetramer. Forms an RuvA(8)-RuvB(12)-Holliday junction (HJ) complex. HJ DNA is sandwiched between 2 RuvA tetramers; dsDNA enters through RuvA and exits via RuvB. An RuvB hexamer assembles on each DNA strand where it exits the tetramer. Each RuvB hexamer is contacted by two RuvA subunits (via domain III) on 2 adjacent RuvB subunits; this complex drives branch migration. In the full resolvosome a probable DNA-RuvA(4)-RuvB(12)-RuvC(2) complex forms which resolves the HJ.

Its subcellular location is the cytoplasm. In terms of biological role, the RuvA-RuvB-RuvC complex processes Holliday junction (HJ) DNA during genetic recombination and DNA repair, while the RuvA-RuvB complex plays an important role in the rescue of blocked DNA replication forks via replication fork reversal (RFR). RuvA specifically binds to HJ cruciform DNA, conferring on it an open structure. The RuvB hexamer acts as an ATP-dependent pump, pulling dsDNA into and through the RuvAB complex. HJ branch migration allows RuvC to scan DNA until it finds its consensus sequence, where it cleaves and resolves the cruciform DNA. The protein is Holliday junction branch migration complex subunit RuvA of Photobacterium profundum (strain SS9).